The following is a 66-amino-acid chain: Large ribosomal subunit protein bL35 (66 aa).

Basic residues predominate over residues 1–26; it reads MPKMKTHRGAAKRVKRTASGKLKRSR. The segment at 1 to 49 is disordered; sequence MPKMKTHRGAAKRVKRTASGKLKRSRAFTSHLFANKSTKQKRKLRKASL.

This sequence belongs to the bacterial ribosomal protein bL35 family.

The polypeptide is Large ribosomal subunit protein bL35 (Staphylococcus carnosus (strain TM300)).